Consider the following 339-residue polypeptide: MKNILVTGGTGFIGSHTVVSLLKSGHQVVILDNLCNSSINILPRLKTITGQEIPFYQGDIRDREILRRIFAENRIDSVIHFAGLKAVGESVAEPMKYYDNNVSGSLVLAEEMARAGVFSIVFSSSATVYGDPGKVPYTEDMPLGDTTSPYGTSKSMVERILTDIQKADPRWSMILLRYFNPIGAHESGLIGEQPNGIPNNLLPYICQVASGRLPQLSVFGGDYPTPDGTGMRDYIHVMDLAEGHVAAMQAKSNVAGTHLLNLGSGRASSVLEIIRAFEAASGLTIPYEVKPRRAGDLACFYADPSYTKAQIGWQTQRDLAQMMEDSWRWVSNNPNGYDD.

NAD(+) contacts are provided by residues 12 to 13, 32 to 37, 59 to 60, 81 to 85, Asn100, Ser125, Tyr150, Lys154, and Phe179; these read FI, DNLCNS, DI, and FAGLK. Substrate is bound by residues Ser125 and Tyr150. Catalysis depends on Tyr150, which acts as the Proton acceptor. Substrate contacts are provided by residues Asn180, 200 to 201, 217 to 219, Arg232, and 293 to 296; these read NL, SVF, and RAGD.

This sequence belongs to the NAD(P)-dependent epimerase/dehydratase family. In terms of assembly, homodimer. NAD(+) serves as cofactor.

It carries out the reaction UDP-alpha-D-glucose = UDP-alpha-D-galactose. Its pathway is carbohydrate metabolism; galactose metabolism. Involved in the metabolism of galactose. Plays an essential role in the incorporation of galactose into meningococcal lipopolysaccharide surface molecules, which are important for pathogenesis. Catalyzes the conversion of UDP-galactose (UDP-Gal) to UDP-glucose (UDP-Glc) through a mechanism involving the transient reduction of NAD. This is UDP-glucose 4-epimerase (galE) from Neisseria meningitidis serogroup A / serotype 4A (strain DSM 15465 / Z2491).